Here is a 1188-residue protein sequence, read N- to C-terminus: MAGHEVRYGKHRTRRSFSRIKEVLDLPNLIEIQTDSFQDFLDHGLKEVFEDVLPISNFTNTMELEFVGYEIREPKYTLEEARIHDASYSAPIFVTFRLINKETGEIKTQEVFFGDFPIMTEMGTFIINGGERIIVSQLVRSPGVYFNDKVDKNGKVGYGSTVIPNRGAWLELETDSKDIAYTRIDRTRKIPFTTLVRALGFSGDDEILDIFGDSDLVRNTIEKDIHKNPMDSRTDEALKEIYERLRPGEPKTAESSRSLLEARFFDPHRYDLAAVGRYKINKKLSVKTRLLNQTIAEPLVDAETGEILVEAGTVMTRSVIDSIAEQLDNGLNKITYIPNDSAVLTAPVDLQKFKVVAPTDPDRVVTIIGNANPSDKVRIVTPADILAEMSYFLNLAEGIGRVDDIDHLGNRRIRAVGELLANQVRLGLSRMERNVRERMSVQDNEVLTPQQIINIRPVTAAIKEFFGSSQLSQFMDQHNPLSELSHKRRLSALGPGGLTRDRAGYEVRDVHYTHYGRMCPIETPEGPNIGLINNLSSYGHLNKYGFIQTPYRKVDREAGVVTNEIVWLTADEEDEFIVAQANSKLNEKGGFAEPIVMGRHQGNNQEFPSDQVDYMDVSPKQVVAVATACIPFLENDDSNRALMGANMQRQAVPLIDPKAPYVGTGMEYQAAHDSGAAVIAQHDGKVTYADADKVEVRREDGSLDVYQIQKFRRSNSGTAYNQRTLVKVGDVVEKGDFIADGPSMENGEMALGQNPIVAYMTWEGYNFEDAVIMSERLVKDDVYTSVHLEEYESETRDTKLGPEEITREIPNVGEDALRNLDEMGIIRIGAEVKEGDILVGKVTPKGEKDLSAEERLLHAIFGDKSREVRDTSLRVPHGADGVVRDVKIFTRANGDELQSGVNMLVRVYIAQKRKIKVGDKMAGRHGNKGVVSRIVPVEDMPYLPDGTPVDIMLNPLGVPSRMNIGQVMELHLGMAARNLGIHIATPVFDGASSEDLWDTVREAGMDSDAKTILYDGRTGEPFDNRVSVGVMYMIKLHHMVDDKLHARSVGPYSMVTQQPLGGKAQFGGQRFGEMEVWALEAYGASNVLQEILTYKSDDVNGRLKAYEAITKGKPIPKPGVPESFRVLVKELQSLGLDMRVLDEDDNEVELRDLDEGEDDDVIHVDDLEKAREKAAQEAKAAFEAEGKE.

It belongs to the RNA polymerase beta chain family. In terms of assembly, the RNAP catalytic core consists of 2 alpha, 1 beta, 1 beta' and 1 omega subunit. When a sigma factor is associated with the core the holoenzyme is formed, which can initiate transcription.

It catalyses the reaction RNA(n) + a ribonucleoside 5'-triphosphate = RNA(n+1) + diphosphate. Its function is as follows. DNA-dependent RNA polymerase catalyzes the transcription of DNA into RNA using the four ribonucleoside triphosphates as substrates. The protein is DNA-directed RNA polymerase subunit beta of Streptococcus sanguinis (strain SK36).